We begin with the raw amino-acid sequence, 581 residues long: Putative phospholipase B-like 3 (581 aa).

Positions 1-16 (MKLLFFLFGLIFAVEQ) are cleaved as a signal peptide. Residues asparagine 50, asparagine 82, asparagine 132, asparagine 169, asparagine 215, asparagine 309, asparagine 543, asparagine 546, and asparagine 560 are each glycosylated (N-linked (GlcNAc...) asparagine).

It belongs to the phospholipase B-like family.

It localises to the secreted. In terms of biological role, putative phospholipase. The protein is Putative phospholipase B-like 3 of Caenorhabditis elegans.